The sequence spans 229 residues: DNA repair protein RecO (229 aa).

It belongs to the RecO family.

Its function is as follows. Involved in DNA repair and RecF pathway recombination. This is DNA repair protein RecO from Legionella pneumophila subsp. pneumophila (strain Philadelphia 1 / ATCC 33152 / DSM 7513).